Here is a 528-residue protein sequence, read N- to C-terminus: Purine-cytosine permease FCY21 (528 aa).

At 1-90 (MPQTHEMSLN…DDSILNAASM (90 aa)) the chain is on the cytoplasmic side. A Phosphoserine modification is found at serine 43. Threonine 46 is modified (phosphothreonine). The helical transmembrane segment at 91–111 (WFSANMVLPAYAIGALGPMVF) threads the bilayer. Topologically, residues 112 to 118 (DLNFGQS) are extracellular. A helical membrane pass occupies residues 119 to 139 (VFVIIFFNLLGLVSVAFFSVF). Residues 140–161 (GAELGLRQMILSRYLVGNIAAR) lie on the Cytoplasmic side of the membrane. A helical transmembrane segment spans residues 162–182 (IFSFINFIACIGWGIVNTVAS). Residues 183-198 (SQVLNMVNPGHQCPLW) are Extracellular-facing. A helical membrane pass occupies residues 199–219 (AGCIVIIGATVIVTFFGYGVI). Residues 220-221 (HA) lie on the Cytoplasmic side of the membrane. A helical transmembrane segment spans residues 222 to 242 (YEKWAWVPNFAVFLVIIARLA). Residues 243 to 260 (RSKKFVLGEWTSGPTTAG) lie on the Extracellular side of the membrane. The helical transmembrane segment at 261–281 (NVLSFGSTVYGFAAGWTTYAA) threads the bilayer. Residues 282 to 295 (DYTVYMPRKTNKYK) are Cytoplasmic-facing. Residues 296 to 316 (IFFSLVVGLATPLYFTMILGA) traverse the membrane as a helical segment. Residues 317–340 (AVAMAAIGDPAWKTYYDENSIGGL) lie on the Extracellular side of the membrane. A helical transmembrane segment spans residues 341–361 (TFAVLVPNSVHGFGQFCCVLL). The Cytoplasmic portion of the chain corresponds to 362–393 (SLSTIANNVPNMYTIALSVQATWEPLAKVPRV). A helical membrane pass occupies residues 394–414 (IWTLLGNAAALGIAIPACYYF). Over 415–416 (ST) the chain is Extracellular. Residues 417–437 (FMNYFMDSIGYYLAIYIAIAC) form a helical membrane-spanning segment. Over 438 to 460 (SEHFIYRRSFSAYNVDDWDSWER) the chain is Cytoplasmic. Residues 461-481 (LPIGIAGTAALIVGAFGVALG) form a helical membrane-spanning segment. At 482–493 (MCQTYWVGEISR) the chain is on the extracellular side. The chain crosses the membrane as a helical span at residues 494-514 (LIGDYGGDIGFELGLSWAFIV). Topologically, residues 515-528 (YNIARPFELKYFGR) are cytoplasmic.

It belongs to the purine-cytosine permease (2.A.39) family.

Its subcellular location is the membrane. Probable purine-cytosine permease. The polypeptide is Purine-cytosine permease FCY21 (FCY21) (Saccharomyces cerevisiae (strain ATCC 204508 / S288c) (Baker's yeast)).